Reading from the N-terminus, the 142-residue chain is Ribosome-binding factor A (142 aa).

A compositionally biased stretch (basic and acidic residues) spans 118–130 (DKAKQKQAGREDD). The segment at 118–142 (DKAKQKQAGREDDTPSVDEQEKDTD) is disordered. Acidic residues predominate over residues 131 to 142 (TPSVDEQEKDTD).

It belongs to the RbfA family. In terms of assembly, monomer. Binds 30S ribosomal subunits, but not 50S ribosomal subunits or 70S ribosomes.

The protein localises to the cytoplasm. Its function is as follows. One of several proteins that assist in the late maturation steps of the functional core of the 30S ribosomal subunit. Associates with free 30S ribosomal subunits (but not with 30S subunits that are part of 70S ribosomes or polysomes). Required for efficient processing of 16S rRNA. May interact with the 5'-terminal helix region of 16S rRNA. The polypeptide is Ribosome-binding factor A (Shewanella denitrificans (strain OS217 / ATCC BAA-1090 / DSM 15013)).